Here is a 502-residue protein sequence, read N- to C-terminus: uncharacterized protein (502 aa).

A helical membrane pass occupies residues 1–21; the sequence is MKIFLVFLSVFFFNGCFGLVY. 2 consecutive PLD phosphodiesterase domains span residues 162 to 189 and 396 to 423; these read IKKR…GDNY and TKHS…DPRS.

It belongs to the phospholipase D family. Cardiolipin synthase subfamily.

The protein localises to the cell membrane. This is an uncharacterized protein from Helicobacter pylori (strain ATCC 700392 / 26695) (Campylobacter pylori).